Consider the following 372-residue polypeptide: Putative 26S proteasome regulatory subunit homolog MTH_1011 (372 aa).

ATP is bound at residue 164-171 (GSPGTGKT).

The protein belongs to the AAA ATPase family.

Functionally, the 26S proteasome is involved in the ATP-dependent degradation of ubiquitinated proteins. The regulatory (or ATPase) complex confers ATP dependency and substrate specificity to the 26S complex. This chain is Putative 26S proteasome regulatory subunit homolog MTH_1011, found in Methanothermobacter thermautotrophicus (strain ATCC 29096 / DSM 1053 / JCM 10044 / NBRC 100330 / Delta H) (Methanobacterium thermoautotrophicum).